The sequence spans 249 residues: Demethylmenaquinone methyltransferase (249 aa).

S-adenosyl-L-methionine-binding positions include Thr-67, Asp-87, and 115-116; that span reads DA.

It belongs to the class I-like SAM-binding methyltransferase superfamily. MenG/UbiE family.

The enzyme catalyses a 2-demethylmenaquinol + S-adenosyl-L-methionine = a menaquinol + S-adenosyl-L-homocysteine + H(+). It participates in quinol/quinone metabolism; menaquinone biosynthesis; menaquinol from 1,4-dihydroxy-2-naphthoate: step 2/2. Functionally, methyltransferase required for the conversion of demethylmenaquinol (DMKH2) to menaquinol (MKH2). The polypeptide is Demethylmenaquinone methyltransferase (Leptospira interrogans serogroup Icterohaemorrhagiae serovar copenhageni (strain Fiocruz L1-130)).